The sequence spans 161 residues: Protein-export protein SecB (161 aa).

It belongs to the SecB family. In terms of assembly, homotetramer, a dimer of dimers. One homotetramer interacts with 1 SecA dimer.

It localises to the cytoplasm. In terms of biological role, one of the proteins required for the normal export of preproteins out of the cell cytoplasm. It is a molecular chaperone that binds to a subset of precursor proteins, maintaining them in a translocation-competent state. It also specifically binds to its receptor SecA. In Coxiella burnetii (strain CbuG_Q212) (Coxiella burnetii (strain Q212)), this protein is Protein-export protein SecB.